A 164-amino-acid polypeptide reads, in one-letter code: Small ribosomal subunit protein uS5 (164 aa).

The S5 DRBM domain maps to 9-72 (YQEKLLKISR…AAAKKNIVKI (64 aa)).

Belongs to the universal ribosomal protein uS5 family. As to quaternary structure, part of the 30S ribosomal subunit. Contacts proteins S4 and S8.

In terms of biological role, with S4 and S12 plays an important role in translational accuracy. Its function is as follows. Located at the back of the 30S subunit body where it stabilizes the conformation of the head with respect to the body. The polypeptide is Small ribosomal subunit protein uS5 (Fusobacterium nucleatum subsp. nucleatum (strain ATCC 25586 / DSM 15643 / BCRC 10681 / CIP 101130 / JCM 8532 / KCTC 2640 / LMG 13131 / VPI 4355)).